The sequence spans 479 residues: Cysteine--tRNA ligase (479 aa).

Cys29 lines the Zn(2+) pocket. The 'HIGH' region signature appears at 31-41 (ATVQGAPHIGH). Residues 171–197 (QRVEDMQDAPDADPRGKRDPRDFALWK) are disordered. Over residues 182–197 (ADPRGKRDPRDFALWK) the composition is skewed to basic and acidic residues. Positions 224, 249, and 253 each coordinate Zn(2+). A 'KMSKS' region motif is present at residues 280–284 (KMSKS). Lys283 provides a ligand contact to ATP.

It belongs to the class-I aminoacyl-tRNA synthetase family. In terms of assembly, monomer. The cofactor is Zn(2+).

It is found in the cytoplasm. The enzyme catalyses tRNA(Cys) + L-cysteine + ATP = L-cysteinyl-tRNA(Cys) + AMP + diphosphate. The sequence is that of Cysteine--tRNA ligase from Kocuria rhizophila (strain ATCC 9341 / DSM 348 / NBRC 103217 / DC2201).